Here is a 214-residue protein sequence, read N- to C-terminus: cAMP-activated global transcriptional regulator Vfr (214 aa).

Residues 59–60 (RE), 73–75 (GEL), 87–88 (RS), 132–133 (TT), arginine 179, and arginine 185 contribute to the 3',5'-cyclic AMP site. The region spanning 142 to 214 (LDVTGRVART…GKTMVVFGTR (73 aa)) is the HTH crp-type domain. Positions 174 to 193 (RQEIGRIVGCSREMVGRVLK) form a DNA-binding region, H-T-H motif.

As to quaternary structure, homodimer.

In terms of biological role, global cAMP-dependent transcriptional regulator that controls virulence gene expression by distinct cAMP-dependent and -independent mechanisms, which allow to fine tune its virulence program in response to specific host cues or environments. Controls the expression of many regulatory targets including type II, type III and type IV secretion systems, flagellar-mediated motility, and quorum sensing systems. Transcriptional control is exerted by binding to a well-characterized consensus site (5'-ANWWTGNGAWNYAGWTCACAT) within target promoters. Directly binds to the toxA upstream region to regulate exotoxin A production, to the lasR gene promoter to activate the las quorum-sensing system or to the exsA promoter to regulate type III secretion system. Autoregulates as well its own expression. The protein is cAMP-activated global transcriptional regulator Vfr (vfr) of Pseudomonas aeruginosa (strain ATCC 15692 / DSM 22644 / CIP 104116 / JCM 14847 / LMG 12228 / 1C / PRS 101 / PAO1).